Here is a 55-residue protein sequence, read N- to C-terminus: Large ribosomal subunit protein bL32 (55 aa).

Residues 1 to 28 (MAVQQNKPTRSKRGMRRSHDALTTATLS) are disordered.

It belongs to the bacterial ribosomal protein bL32 family.

This chain is Large ribosomal subunit protein bL32, found in Serratia proteamaculans (strain 568).